The sequence spans 393 residues: Acetylornithine aminotransferase (393 aa).

Pyridoxal 5'-phosphate contacts are provided by residues 100 to 101 (GA) and Phe-133. Residue Arg-136 participates in N(2)-acetyl-L-ornithine binding. 218–221 (DEVQ) contacts pyridoxal 5'-phosphate. An N6-(pyridoxal phosphate)lysine modification is found at Lys-247. Ser-274 provides a ligand contact to N(2)-acetyl-L-ornithine. Pyridoxal 5'-phosphate is bound at residue Thr-275.

This sequence belongs to the class-III pyridoxal-phosphate-dependent aminotransferase family. ArgD subfamily. As to quaternary structure, homodimer. The cofactor is pyridoxal 5'-phosphate.

Its subcellular location is the cytoplasm. It catalyses the reaction N(2)-acetyl-L-ornithine + 2-oxoglutarate = N-acetyl-L-glutamate 5-semialdehyde + L-glutamate. It functions in the pathway amino-acid biosynthesis; L-arginine biosynthesis; N(2)-acetyl-L-ornithine from L-glutamate: step 4/4. This is Acetylornithine aminotransferase from Caldanaerobacter subterraneus subsp. tengcongensis (strain DSM 15242 / JCM 11007 / NBRC 100824 / MB4) (Thermoanaerobacter tengcongensis).